The sequence spans 1089 residues: Protein phosphatase 1 regulatory subunit 3A (1089 aa).

The tract at residues 32-57 (KATFKPGFSPQPSRRGSGSSEDMYLD) is disordered. A compositionally biased stretch (low complexity) spans 37-51 (PGFSPQPSRRGSGSS). Phosphoserine; by GSK3 occurs at positions 40 and 44. Phosphoserine occurs at positions 48 and 51. T58 bears the Phosphothreonine mark. The PP1-binding motif signature appears at 64-67 (RRVS). S67 bears the Phosphoserine; by PKA mark. The region spanning 123–231 (EQLQVQKAVL…NNNGTNYILV (109 aa)) is the CBM21 domain. Disordered stretches follow at residues 385 to 420 (FYHS…GDTS), 479 to 501 (HGDS…KVDN), and 566 to 649 (PCPS…SDIA). Polar residues predominate over residues 581-600 (SGSNLEPGTSDLSSPRNFSP). Residues 602–614 (TDDHLFQADRENS) show a composition bias toward basic and acidic residues. A compositionally biased stretch (polar residues) spans 615 to 625 (DSSNPENQNMN). Position 821 is a phosphoserine (S821). Positions 949–968 (IMKSGSGGERGGGPILQQKE) are disordered. A compositionally biased stretch (gly residues) spans 953-962 (GSGGERGGGP). The chain crosses the membrane as a helical span at residues 1047-1067 (LLFLIFLATVYYYDLMIGLAF).

Interacts with PPP1CC catalytic subunit of PP1, and associates with glycogen. In terms of processing, phosphorylation at Ser-48 by ISPK stimulates the dephosphorylation of glycogen synthase and phosphorylase kinase. In terms of tissue distribution, skeletal muscle and heart.

The protein resides in the membrane. Its function is as follows. Seems to act as a glycogen-targeting subunit for PP1. PP1 is essential for cell division, and participates in the regulation of glycogen metabolism, muscle contractility and protein synthesis. Plays an important role in glycogen synthesis but is not essential for insulin activation of glycogen synthase. This is Protein phosphatase 1 regulatory subunit 3A (Ppp1r3a) from Mus musculus (Mouse).